The primary structure comprises 196 residues: MLSHLRPAIVSAGLFTVLLGLAYPLAVTGVAQAAFPAQANGSLVKDAKGTVVGSTLIAQAFAKPEYLHPRPSAAGAGYDASASSGSNMGPLNDTLIKREKTDADALRAENPGVVIPADAVTTSGSGLDPEISPANARFQAPRVAKARGLRLAQVQAVIDGQAQGPLLGFIGQPRVNVLTVNRTLDARFPAHGQKGG.

A helical membrane pass occupies residues Pro7–Val27.

The protein belongs to the KdpC family. The system is composed of three essential subunits: KdpA, KdpB and KdpC.

It localises to the cell inner membrane. Functionally, part of the high-affinity ATP-driven potassium transport (or Kdp) system, which catalyzes the hydrolysis of ATP coupled with the electrogenic transport of potassium into the cytoplasm. This subunit acts as a catalytic chaperone that increases the ATP-binding affinity of the ATP-hydrolyzing subunit KdpB by the formation of a transient KdpB/KdpC/ATP ternary complex. This chain is Potassium-transporting ATPase KdpC subunit, found in Caulobacter sp. (strain K31).